The following is a 566-amino-acid chain: Protein RocB (566 aa).

Functionally, involved in arginine degradative pathway. This Bacillus subtilis (strain 168) protein is Protein RocB (rocB).